The chain runs to 110 residues: MEIEKTNRMNALFEFYAALLTDKQMNYIELYYADDYSLAEIAEEFGVSRQAVYDNIKRTEKILEDYEMKLHMYSDYIVRSQILEEIAEKYPKDSFLQEQIATLSSIDNRD.

It belongs to the UPF0122 family.

Functionally, might take part in the signal recognition particle (SRP) pathway. This is inferred from the conservation of its genetic proximity to ftsY/ffh. May be a regulatory protein. The chain is UPF0122 protein SGO_1122 from Streptococcus gordonii (strain Challis / ATCC 35105 / BCRC 15272 / CH1 / DL1 / V288).